The sequence spans 1341 residues: DNA-directed RNA polymerase subunit beta (1341 aa).

The protein belongs to the RNA polymerase beta chain family. The RNAP catalytic core consists of 2 alpha, 1 beta, 1 beta' and 1 omega subunit. When a sigma factor is associated with the core the holoenzyme is formed, which can initiate transcription.

The catalysed reaction is RNA(n) + a ribonucleoside 5'-triphosphate = RNA(n+1) + diphosphate. Its function is as follows. DNA-dependent RNA polymerase catalyzes the transcription of DNA into RNA using the four ribonucleoside triphosphates as substrates. The polypeptide is DNA-directed RNA polymerase subunit beta (Photobacterium profundum (strain SS9)).